A 562-amino-acid chain; its full sequence is Tissue-type plasminogen activator (562 aa).

Positions 1 to 20 (MNAMKRGLCCVLLLCGAVFA) are cleaved as a signal peptide. A propeptide spanning residues 21-32 (LPSQEIHARVRR) is cleaved from the precursor. Positions 33–35 (GAR) are cleaved as a propeptide — removed by plasmin. One can recognise a Fibronectin type-I domain in the interval 39 to 81 (VICRDEKTQMIYQQHQSWLRPVLRSNRVEYCWCNSGRAQCHSV). 17 cysteine pairs are disulfide-bonded: cysteine 41-cysteine 71, cysteine 69-cysteine 78, cysteine 86-cysteine 97, cysteine 91-cysteine 108, cysteine 110-cysteine 119, cysteine 127-cysteine 208, cysteine 148-cysteine 190, cysteine 179-cysteine 203, cysteine 215-cysteine 296, cysteine 236-cysteine 278, cysteine 267-cysteine 291, cysteine 299-cysteine 430, cysteine 342-cysteine 358, cysteine 350-cysteine 419, cysteine 444-cysteine 519, cysteine 476-cysteine 492, and cysteine 509-cysteine 537. The important for binding to annexin A2 stretch occupies residues 42-52 (RDEKTQMIYQQ). The 39-residue stretch at 82 to 120 (PVRSCSEPRCFNGGTCQQALYFSDFVCQCPEGFAGKCCE) folds into the EGF-like domain. An O-linked (Fuc) threonine glycan is attached at threonine 96. Kringle domains follow at residues 126–208 (TCYE…TPAC) and 214–296 (DCYF…VPSC). Asparagine 152 is a glycosylation site (N-linked (GlcNAc...) asparagine). The Peptidase S1 domain occupies 311 to 561 (IKGGLFADIA…YLDWIHDNMR (251 aa)). Residues histidine 357 and aspartate 406 each act as charge relay system in the active site. N-linked (GlcNAc...) asparagine glycosylation occurs at asparagine 483. Catalysis depends on serine 513, which acts as the Charge relay system.

This sequence belongs to the peptidase S1 family. In terms of assembly, heterodimer of chain A and chain B held by a disulfide bond. Binds to fibrin with high affinity. This interaction leads to an increase in the catalytic efficiency of the enzyme due to an increase in affinity for plasminogen. Similarly, binding to heparin increases the activation of plasminogen. Binds to annexin A2, cytokeratin-8, fibronectin and laminin. Binds to mannose receptor and the low-density lipoprotein receptor-related protein (LRP1); these proteins are involved in TPA clearance. Binds LRP1B; binding is followed by internalization and degradation. Forms heterodimer with SERPINA5. Interacts with SERPINE1. In complex with SERPINE1, interacts with SORL1. Post-translationally, the single chain, almost fully active enzyme, can be further processed into a two-chain fully active form by a cleavage after Arg-310 catalyzed by plasmin, tissue kallikrein or factor Xa.

It is found in the secreted. The protein resides in the extracellular space. The catalysed reaction is Specific cleavage of Arg-|-Val bond in plasminogen to form plasmin.. With respect to regulation, inhibited by SERPINA5. Inhibited by SERPINE1. Converts the abundant, but inactive, zymogen plasminogen to plasmin by hydrolyzing a single Arg-Val bond in plasminogen. By controlling plasmin-mediated proteolysis, it plays an important role in tissue remodeling and degradation, in cell migration and many other physiopathological events. During oocyte activation, plays a role in cortical granule reaction in the zona reaction, which contributes to the block to polyspermy. In Pongo abelii (Sumatran orangutan), this protein is Tissue-type plasminogen activator (PLAT).